Here is a 146-residue protein sequence, read N- to C-terminus: Large ribosomal subunit protein uL15 (146 aa).

The segment covering 1-10 (MTLKLHDLRP) has biased composition (basic and acidic residues). Residues 1 to 41 (MTLKLHDLRPARGSKTARTRVGRGDGSKGKTAGRGTKGTRA) form a disordered region.

This sequence belongs to the universal ribosomal protein uL15 family. In terms of assembly, part of the 50S ribosomal subunit.

Its function is as follows. Binds to the 23S rRNA. In Mycobacterium bovis (strain BCG / Pasteur 1173P2), this protein is Large ribosomal subunit protein uL15.